A 326-amino-acid chain; its full sequence is ELAV-like protein 1 (326 aa).

3 RRM domains span residues 20–98 (TNLI…VARP), 106–186 (ANLY…FAAN), and 244–322 (WCIF…FKTS).

Belongs to the RRM elav family. As to quaternary structure, interacts (via RRM3) with cirbp. Unable to form oligomers. Part of a ribonucleoprotein (RNP) complex, at least composed of elavl1/elrA and/or elavl2/elrB, igf2bp3/vg1RBP, ddx6/Xp54, ybx2/frgy2, lsm14b/rap55b and, in a subset of RNP complexes, stau1/staufen.

Its subcellular location is the cytoplasm. The protein localises to the cell cortex. Its function is as follows. RNA-binding protein that binds to the 3'-UTR region of mRNAs and increases their stability. Involved in embryonic stem cells (ESCs) differentiation: preferentially binds mRNAs that are not methylated by N6-methyladenosine (m6A), stabilizing them, promoting ESCs differentiation. Binds to poly-U elements and AU-rich elements (AREs) in the 3'-UTR of target mRNAs. Acts cooperatively with cribp to stabilize AU-rich sequence (ARE)-containing mRNAs. May play a role during gastrulation. Required for the vegetal localization of vg1 mRNA. The sequence is that of ELAV-like protein 1 from Xenopus tropicalis (Western clawed frog).